We begin with the raw amino-acid sequence, 126 residues long: Phosphoribosyl-AMP cyclohydrolase (126 aa).

Residue D74 participates in Mg(2+) binding. C75 provides a ligand contact to Zn(2+). 2 residues coordinate Mg(2+): D76 and D78. 2 residues coordinate Zn(2+): C92 and C99.

This sequence belongs to the PRA-CH family. Homodimer. Requires Mg(2+) as cofactor. The cofactor is Zn(2+).

It is found in the cytoplasm. The enzyme catalyses 1-(5-phospho-beta-D-ribosyl)-5'-AMP + H2O = 1-(5-phospho-beta-D-ribosyl)-5-[(5-phospho-beta-D-ribosylamino)methylideneamino]imidazole-4-carboxamide. Its pathway is amino-acid biosynthesis; L-histidine biosynthesis; L-histidine from 5-phospho-alpha-D-ribose 1-diphosphate: step 3/9. In terms of biological role, catalyzes the hydrolysis of the adenine ring of phosphoribosyl-AMP. The polypeptide is Phosphoribosyl-AMP cyclohydrolase (Geotalea daltonii (strain DSM 22248 / JCM 15807 / FRC-32) (Geobacter daltonii)).